The primary structure comprises 54 residues: Ovomucoid (54 aa).

Residues 4 to 54 form the Kazal-like domain; it reads VDCSDYPKPVCSLDYMPLCGSDNTTYNNKCIFCNAVVDSNGTITLSHFGKC. Cystine bridges form between Cys-6–Cys-36, Cys-14–Cys-33, and Cys-22–Cys-54. Asn-43 is a glycosylation site (N-linked (GlcNAc...) asparagine).

It is found in the secreted. In Haemorhous mexicanus (House finch), this protein is Ovomucoid.